We begin with the raw amino-acid sequence, 286 residues long: Shikimate dehydrogenase (NADP(+)) (286 aa).

Shikimate contacts are provided by residues Ser-19–Ser-21 and Thr-66. Residue Lys-70 is the Proton acceptor of the active site. Positions 91 and 107 each coordinate shikimate. NADP(+) is bound by residues Gly-129 to Ala-133 and Leu-229. Tyr-231 serves as a coordination point for shikimate. NADP(+) is bound at residue Gly-252.

The protein belongs to the shikimate dehydrogenase family. As to quaternary structure, homodimer.

It carries out the reaction shikimate + NADP(+) = 3-dehydroshikimate + NADPH + H(+). Its pathway is metabolic intermediate biosynthesis; chorismate biosynthesis; chorismate from D-erythrose 4-phosphate and phosphoenolpyruvate: step 4/7. Functionally, involved in the biosynthesis of the chorismate, which leads to the biosynthesis of aromatic amino acids. Catalyzes the reversible NADPH linked reduction of 3-dehydroshikimate (DHSA) to yield shikimate (SA). This is Shikimate dehydrogenase (NADP(+)) from Prochlorococcus marinus (strain MIT 9215).